Here is a 524-residue protein sequence, read N- to C-terminus: Cytokinin dehydrogenase 7 (524 aa).

The FAD-binding PCMH-type domain occupies 58-238 (NCVKPLAVVR…TRARVLLQPA (181 aa)). FAD-binding residues include alanine 91, glycine 93, asparagine 94, and glycine 95. The residue at position 96 (histidine 96) is a Pros-8alpha-FAD histidine. FAD is bound by residues serine 97, glutamine 101, aspartate 162, threonine 167, serine 173, valine 177, isoleucine 228, tyrosine 479, serine 514, and glutamine 517.

Belongs to the oxygen-dependent FAD-linked oxidoreductase family. It depends on FAD as a cofactor. As to expression, expressed in the vasculature of roots, hypocotyls, cotyledons and leaves of young seedlings. In flowers, expressed in the transmitting tissue of the gynoecium prior to pollination. Expressed in the mature embryo sac with maximum activity in the egg cell and the synergids.

The protein resides in the cytoplasm. Its subcellular location is the cytosol. It carries out the reaction N(6)-dimethylallyladenine + A + H2O = 3-methyl-2-butenal + adenine + AH2. Its function is as follows. Catalyzes the oxidation of cytokinins, a family of N(6)-substituted adenine derivatives that are plant hormones, where the substituent is an isopentenyl group. Catalyzes in vitro the oxidation of various types of cytokinin nucleotides that are known as direct products of cytokinin biosynthesis. The protein is Cytokinin dehydrogenase 7 (CKX7) of Arabidopsis thaliana (Mouse-ear cress).